Reading from the N-terminus, the 521-residue chain is MKTAHWADFYAEKIKKEKGPKNLYTVASGITPSGTVHIGNFREVISVDLVARALRDSGSKVRFIYSWDNYDVFRKVPKNMPEQELLTTYLRQAITRVPDTRSHKTSYARANEIEFEKYLPVVGINPEFIDQSKQYTSNAYASQIKFALDHKKELSEALNEYRTSKLEENWYPISVFCTKCNRDTTTVNNYDNHYSVEYSCECGNQESLDIRTTWAIKLPWRIDWPMRWKYEKVDFEPAGKDHHSSGGSFDTSKNIVKIFQGSPPVTFQYDFISIKGRGGKISSSSGDVISLKDVLEVYTPEVTRFLFAATKPNTEFSISFDLDVIKIYEDYDKFERIYYGVEDVKEEKKRAFKRIYELSQPYMPSKRIPYQVGFRHLSVISQIFENNINKILNYLKNVQEDQKDKLINKINCAINWIRDFAPEDFKFSLRSKFDNMEILEENSKKAINELLDFLKKNFEVATEQDIQNEIYKISRENNIEPALFFKQIYKILIDKEKGPKLAGFIKIIGIDRFEKITSKYV.

A 'HIGH' region motif is present at residues 32–40 (PSGTVHIGN). The short motif at 280–284 (KISSS) is the 'KMSKS' region element.

The protein belongs to the class-I aminoacyl-tRNA synthetase family.

The protein resides in the cytoplasm. The catalysed reaction is tRNA(Lys) + L-lysine + ATP = L-lysyl-tRNA(Lys) + AMP + diphosphate. This Borreliella burgdorferi (strain ATCC 35210 / DSM 4680 / CIP 102532 / B31) (Borrelia burgdorferi) protein is Lysine--tRNA ligase (lysS).